The chain runs to 102 residues: Small ribosomal subunit protein uS10 (102 aa).

The protein belongs to the universal ribosomal protein uS10 family. In terms of assembly, part of the 30S ribosomal subunit.

Involved in the binding of tRNA to the ribosomes. The sequence is that of Small ribosomal subunit protein uS10 from Bifidobacterium longum subsp. infantis (strain ATCC 15697 / DSM 20088 / JCM 1222 / NCTC 11817 / S12).